The sequence spans 286 residues: Probable endonuclease 4 (286 aa).

Zn(2+) contacts are provided by His-71, His-111, Glu-147, Asp-181, His-184, His-218, Asp-231, His-233, and Glu-263.

This sequence belongs to the AP endonuclease 2 family. Zn(2+) is required as a cofactor.

It carries out the reaction Endonucleolytic cleavage to 5'-phosphooligonucleotide end-products.. Functionally, endonuclease IV plays a role in DNA repair. It cleaves phosphodiester bonds at apurinic or apyrimidinic (AP) sites, generating a 3'-hydroxyl group and a 5'-terminal sugar phosphate. The polypeptide is Probable endonuclease 4 (Vibrio cholerae serotype O1 (strain ATCC 39541 / Classical Ogawa 395 / O395)).